Reading from the N-terminus, the 468-residue chain is ATP synthase subunit beta (468 aa).

Glycine 155 to threonine 162 contacts ATP.

The protein belongs to the ATPase alpha/beta chains family. As to quaternary structure, F-type ATPases have 2 components, CF(1) - the catalytic core - and CF(0) - the membrane proton channel. CF(1) has five subunits: alpha(3), beta(3), gamma(1), delta(1), epsilon(1). CF(0) has three main subunits: a(1), b(2) and c(9-12). The alpha and beta chains form an alternating ring which encloses part of the gamma chain. CF(1) is attached to CF(0) by a central stalk formed by the gamma and epsilon chains, while a peripheral stalk is formed by the delta and b chains.

Its subcellular location is the cell membrane. The enzyme catalyses ATP + H2O + 4 H(+)(in) = ADP + phosphate + 5 H(+)(out). Produces ATP from ADP in the presence of a proton gradient across the membrane. The catalytic sites are hosted primarily by the beta subunits. In Streptococcus pyogenes serotype M5 (strain Manfredo), this protein is ATP synthase subunit beta.